The following is a 383-amino-acid chain: Homoserine O-acetyltransferase (383 aa).

The AB hydrolase-1 domain maps to 52-362 (NAILVCHALT…PWGHDAFLLD (311 aa)). The active-site Nucleophile is Ser-158. Arg-227 contributes to the substrate binding site. Residues Asp-323 and His-356 contribute to the active site. Residue Asp-357 participates in substrate binding.

The protein belongs to the AB hydrolase superfamily. MetX family. Homodimer.

The protein localises to the cytoplasm. The enzyme catalyses L-homoserine + acetyl-CoA = O-acetyl-L-homoserine + CoA. The protein operates within amino-acid biosynthesis; L-methionine biosynthesis via de novo pathway; O-acetyl-L-homoserine from L-homoserine: step 1/1. Transfers an acetyl group from acetyl-CoA to L-homoserine, forming acetyl-L-homoserine. The sequence is that of Homoserine O-acetyltransferase from Symbiobacterium thermophilum (strain DSM 24528 / JCM 14929 / IAM 14863 / T).